A 680-amino-acid polypeptide reads, in one-letter code: DNA-directed RNA polymerase subunit beta' (680 aa).

Residues Cys-69, Cys-71, Cys-87, and Cys-90 each coordinate Zn(2+). Residues Asp-489, Asp-491, and Asp-493 each contribute to the Mg(2+) site.

Belongs to the RNA polymerase beta' chain family. RpoC1 subfamily. As to quaternary structure, in plastids the minimal PEP RNA polymerase catalytic core is composed of four subunits: alpha, beta, beta', and beta''. When a (nuclear-encoded) sigma factor is associated with the core the holoenzyme is formed, which can initiate transcription. Requires Mg(2+) as cofactor. The cofactor is Zn(2+).

The protein resides in the plastid. It is found in the chloroplast. It catalyses the reaction RNA(n) + a ribonucleoside 5'-triphosphate = RNA(n+1) + diphosphate. In terms of biological role, DNA-dependent RNA polymerase catalyzes the transcription of DNA into RNA using the four ribonucleoside triphosphates as substrates. The sequence is that of DNA-directed RNA polymerase subunit beta' from Amborella trichopoda.